A 135-amino-acid polypeptide reads, in one-letter code: Cystatin-1 (135 aa).

The N-terminal stretch at 1 to 24 is a signal peptide; sequence MRKHRIVSLVAALLVLLALAAVSS. Residues 86–90 carry the Secondary area of contact motif; it reads QVVAG.

The protein belongs to the cystatin family. Phytocystatin subfamily.

The sequence is that of Cystatin-1 (RAMDAZC7) from Zea mays (Maize).